The primary structure comprises 105 residues: Large ribosomal subunit protein uL24 (105 aa).

It belongs to the universal ribosomal protein uL24 family. As to quaternary structure, part of the 50S ribosomal subunit.

Functionally, one of two assembly initiator proteins, it binds directly to the 5'-end of the 23S rRNA, where it nucleates assembly of the 50S subunit. Its function is as follows. One of the proteins that surrounds the polypeptide exit tunnel on the outside of the subunit. The sequence is that of Large ribosomal subunit protein uL24 from Xanthobacter autotrophicus (strain ATCC BAA-1158 / Py2).